The following is a 486-amino-acid chain: GDP-Man:Man(3)GlcNAc(2)-PP-Dol alpha-1,2-mannosyltransferase (486 aa).

At 1 to 16 (MAGPMCLCGMMRLLTA) the chain is on the lumenal side. A helical membrane pass occupies residues 17–37 (LFIPVLITSVGLCLIFVLLFI). Topologically, residues 38-229 (CTRLWVQRKK…SNNPVLSRLK (192 aa)) are cytoplasmic. Positions 230 to 250 (LIYYYLFALFYGWVGSCSDVI) form an intramembrane region, helical. Residues 251–393 (MVNSTWTFSH…IGLHTMWNEH (143 aa)) lie on the Cytoplasmic side of the membrane. An intramembrane region (helical) is located at residues 394 to 414 (FGIGIVECMAAGTIILAHNSG). Residues 415 to 486 (GPKLDIVVPH…FLASSEPLFK (72 aa)) are Cytoplasmic-facing.

This sequence belongs to the glycosyltransferase group 1 family. Glycosyltransferase 4 subfamily.

The protein resides in the endoplasmic reticulum membrane. The catalysed reaction is an alpha-D-Man-(1-&gt;3)-[alpha-D-Man-(1-&gt;6)]-beta-D-Man-(1-&gt;4)-beta-D-GlcNAc-(1-&gt;4)-alpha-D-GlcNAc-diphospho-di-trans,poly-cis-dolichol + 2 GDP-alpha-D-mannose = an alpha-D-Man-(1-&gt;2)-alpha-D-Man-(1-&gt;2)-alpha-D-Man-(1-&gt;3)-[alpha-D-Man-(1-&gt;6)]-beta-D-Man-(1-&gt;4)-beta-D-GlcNAc-(1-&gt;4)-alpha-D-GlcNAc-diphospho-di-trans,poly-cis-dolichol + 2 GDP + 2 H(+). It participates in protein modification; protein glycosylation. Functionally, GDP-Man:Man(3)GlcNAc(2)-PP-Dol alpha-1,2-mannosyltransferase that operates in the biosynthetic pathway of dolichol-linked oligosaccharides, the glycan precursors employed in protein asparagine (N)-glycosylation. The assembly of dolichol-linked oligosaccharides begins on the cytosolic side of the endoplasmic reticulum membrane and finishes in its lumen. The sequential addition of sugars to dolichol pyrophosphate produces dolichol-linked oligosaccharides containing fourteen sugars, including two GlcNAcs, nine mannoses and three glucoses. Once assembled, the oligosaccharide is transferred from the lipid to nascent proteins by oligosaccharyltransferases. Catalyzes, on the cytoplasmic face of the endoplasmic reticulum, the addition of the fourth and fifth mannose residues to the dolichol-linked oligosaccharide chain, to produce Man(5)GlcNAc(2)-PP-dolichol core oligosaccharide. Man(5)GlcNAc(2)-PP-dolichol is a substrate for ALG3, the following enzyme in the biosynthetic pathway. The sequence is that of GDP-Man:Man(3)GlcNAc(2)-PP-Dol alpha-1,2-mannosyltransferase (alg11) from Xenopus laevis (African clawed frog).